The primary structure comprises 431 residues: Histidine--tRNA ligase (431 aa).

This sequence belongs to the class-II aminoacyl-tRNA synthetase family. As to quaternary structure, homodimer.

It localises to the cytoplasm. It catalyses the reaction tRNA(His) + L-histidine + ATP = L-histidyl-tRNA(His) + AMP + diphosphate + H(+). The chain is Histidine--tRNA ligase from Neisseria gonorrhoeae (strain ATCC 700825 / FA 1090).